The chain runs to 128 residues: Probable 4-amino-4-deoxy-L-arabinose-phosphoundecaprenol flippase subunit ArnF (128 aa).

At 1–2 (MG) the chain is on the cytoplasmic side. A helical transmembrane segment spans residues 3-23 (LMWGLFSVIIASAAQLSLGFA). The Periplasmic portion of the chain corresponds to 24–32 (ASHLPPMTH). A helical transmembrane segment spans residues 33-53 (LWDFIAALLAFGLDARILLLG). The Cytoplasmic segment spans residues 54–76 (LQGYLLSVFCWYKTLHKLALSKA). The helical transmembrane segment at 77–97 (YALLSMSYVLVWIASMVLPGW) threads the bilayer. Topologically, residues 98–100 (EGT) are periplasmic. Residues 101-121 (FSLKALLGVACIMSGLMLIFL) traverse the membrane as a helical segment. The Cytoplasmic portion of the chain corresponds to 122–128 (PTTKQRY).

It belongs to the ArnF family. As to quaternary structure, heterodimer of ArnE and ArnF.

It localises to the cell inner membrane. Its pathway is bacterial outer membrane biogenesis; lipopolysaccharide biosynthesis. In terms of biological role, translocates 4-amino-4-deoxy-L-arabinose-phosphoundecaprenol (alpha-L-Ara4N-phosphoundecaprenol) from the cytoplasmic to the periplasmic side of the inner membrane. In Escherichia coli O7:K1 (strain IAI39 / ExPEC), this protein is Probable 4-amino-4-deoxy-L-arabinose-phosphoundecaprenol flippase subunit ArnF.